A 166-amino-acid chain; its full sequence is Regulatory protein RecX (166 aa).

Belongs to the RecX family.

It localises to the cytoplasm. Functionally, modulates RecA activity. This Escherichia coli (strain SMS-3-5 / SECEC) protein is Regulatory protein RecX.